We begin with the raw amino-acid sequence, 320 residues long: Cytochrome f (320 aa).

The N-terminal stretch at 1 to 35 (MQTRNTFSWIREEITRSISVSLMIYIITWASISSA) is a signal peptide. Heme is bound by residues Y36, C56, C59, and H60. Residues 286-306 (VQGLLFFLGSVVLAQIFLVLK) traverse the membrane as a helical segment.

It belongs to the cytochrome f family. The 4 large subunits of the cytochrome b6-f complex are cytochrome b6, subunit IV (17 kDa polypeptide, petD), cytochrome f and the Rieske protein, while the 4 small subunits are PetG, PetL, PetM and PetN. The complex functions as a dimer. Heme is required as a cofactor.

The protein localises to the plastid. The protein resides in the chloroplast thylakoid membrane. In terms of biological role, component of the cytochrome b6-f complex, which mediates electron transfer between photosystem II (PSII) and photosystem I (PSI), cyclic electron flow around PSI, and state transitions. This is Cytochrome f from Lepidium virginicum (Virginia pepperweed).